The primary structure comprises 771 residues: Leucine-rich repeat and fibronectin type III domain-containing protein 1 (771 aa).

The first 31 residues, 1–31, serve as a signal peptide directing secretion; sequence MAPGPFSSALLSPPPAALPFLLLLWAGASRG. Residues 32-65 form the LRRNT domain; sequence QPCPGRCICQNVAPTLTMLCAKTGLLFVPPAIDR. The Extracellular portion of the chain corresponds to 32–536; that stretch reads QPCPGRCICQ…LRAHFLGGTM (505 aa). LRR repeat units follow at residues 66–87, 90–111, 114–135, 138–159, 163–184, 187–208, and 211–232; these read RVVE…DFAN, SLVH…AFAD, ALRA…QLRG, NLRH…AFDA, TVED…AVGQ, NLNT…TFVQ, and KLVR…GLFL. N87 carries N-linked (GlcNAc...) asparagine glycosylation. An LRRCT domain is found at 252–298; it reads NPLHCNCELLWLRRLTREDDLETCATPEHLTDRYFWSIPEEEFLCEP. Positions 299–386 constitute an Ig-like domain; that stretch reads PLITRQAGGR…GEATAPVEVC (88 aa). An intrachain disulfide couples C321 to C370. N-linked (GlcNAc...) asparagine glycosylation is present at N343. Positions 397–422 are disordered; it reads PAAPPPLTEPGSSDIATPGRPGANDS. The Fibronectin type-III domain occupies 424–520; sequence AERRLVAAEL…GCVQFTTAGD (97 aa). A helical transmembrane segment spans residues 537 to 557; sequence IIAIGGVIVASVLVFIVLLMI. At 558-771 the chain is on the cytoplasmic side; it reads RYKVYGDGDS…STEWMLESTV (214 aa). Phosphoserine is present on residues S613 and S718. The interval 654–743 is disordered; it reads PSEETSGEES…HLDGAGGGAA (90 aa). Positions 719–732 are enriched in basic residues; it reads YPRRARRTKRHRST. The PDZ-binding signature appears at 768-771; the sequence is ESTV.

Belongs to the LRFN family. Can form heteromeric complexes with LRFN2, LRFN3, LRFN4 and LRFN5. Forms homomeric complexes, but not across cell junctions. Interacts with DLG1, DLG2, DLG3 and DLG4. Interacts with 2 AMPA receptor subunits GRIA1 and GRIA2 and NMDA receptor subunit GRIN1. Glycosylated.

It localises to the membrane. Its subcellular location is the synapse. It is found in the postsynaptic density membrane. Its function is as follows. Promotes neurite outgrowth in hippocampal neurons. Involved in the regulation and maintenance of excitatory synapses. Induces the clustering of excitatory postsynaptic proteins, including DLG4, DLGAP1, GRIA1 and GRIN1. In Homo sapiens (Human), this protein is Leucine-rich repeat and fibronectin type III domain-containing protein 1 (LRFN1).